A 148-amino-acid polypeptide reads, in one-letter code: Low molecular weight protein-tyrosine-phosphatase Etp (148 aa).

C13 functions as the Nucleophile in the catalytic mechanism. R19 is a catalytic residue. The Proton donor role is filled by D119.

This sequence belongs to the low molecular weight phosphotyrosine protein phosphatase family.

The enzyme catalyses O-phospho-L-tyrosyl-[protein] + H2O = L-tyrosyl-[protein] + phosphate. Dephosphorylates etk. The chain is Low molecular weight protein-tyrosine-phosphatase Etp (etp) from Escherichia coli O157:H7.